The primary structure comprises 55 residues: MAKATTIKIKLLSTADTGTFYVTTKNSRTFTDKMTKTKYDPVVRKHVEFKETKIK.

Belongs to the bacterial ribosomal protein bL33 family.

The protein is Large ribosomal subunit protein bL33 of Agrobacterium fabrum (strain C58 / ATCC 33970) (Agrobacterium tumefaciens (strain C58)).